A 379-amino-acid chain; its full sequence is 4-hydroxy-3-methylbut-2-enyl diphosphate reductase (379 aa).

Cysteine 39 serves as a coordination point for [4Fe-4S] cluster. Histidine 69 lines the (2E)-4-hydroxy-3-methylbut-2-enyl diphosphate pocket. Residue histidine 69 coordinates dimethylallyl diphosphate. Histidine 69 lines the isopentenyl diphosphate pocket. Cysteine 130 serves as a coordination point for [4Fe-4S] cluster. Histidine 158 serves as a coordination point for (2E)-4-hydroxy-3-methylbut-2-enyl diphosphate. A dimethylallyl diphosphate-binding site is contributed by histidine 158. Histidine 158 is an isopentenyl diphosphate binding site. Residue glutamate 160 is the Proton donor of the active site. Threonine 223 contributes to the (2E)-4-hydroxy-3-methylbut-2-enyl diphosphate binding site. Position 261 (cysteine 261) interacts with [4Fe-4S] cluster. 4 residues coordinate (2E)-4-hydroxy-3-methylbut-2-enyl diphosphate: serine 290, serine 291, asparagine 292, and serine 352. Dimethylallyl diphosphate-binding residues include serine 290, serine 291, asparagine 292, and serine 352. Serine 290, serine 291, asparagine 292, and serine 352 together coordinate isopentenyl diphosphate.

It belongs to the IspH family. It depends on [4Fe-4S] cluster as a cofactor.

It carries out the reaction isopentenyl diphosphate + 2 oxidized [2Fe-2S]-[ferredoxin] + H2O = (2E)-4-hydroxy-3-methylbut-2-enyl diphosphate + 2 reduced [2Fe-2S]-[ferredoxin] + 2 H(+). The enzyme catalyses dimethylallyl diphosphate + 2 oxidized [2Fe-2S]-[ferredoxin] + H2O = (2E)-4-hydroxy-3-methylbut-2-enyl diphosphate + 2 reduced [2Fe-2S]-[ferredoxin] + 2 H(+). Its pathway is isoprenoid biosynthesis; dimethylallyl diphosphate biosynthesis; dimethylallyl diphosphate from (2E)-4-hydroxy-3-methylbutenyl diphosphate: step 1/1. It participates in isoprenoid biosynthesis; isopentenyl diphosphate biosynthesis via DXP pathway; isopentenyl diphosphate from 1-deoxy-D-xylulose 5-phosphate: step 6/6. Its function is as follows. Catalyzes the conversion of 1-hydroxy-2-methyl-2-(E)-butenyl 4-diphosphate (HMBPP) into a mixture of isopentenyl diphosphate (IPP) and dimethylallyl diphosphate (DMAPP). Acts in the terminal step of the DOXP/MEP pathway for isoprenoid precursor biosynthesis. This chain is 4-hydroxy-3-methylbut-2-enyl diphosphate reductase, found in Synechocystis sp. (strain ATCC 27184 / PCC 6803 / Kazusa).